A 440-amino-acid polypeptide reads, in one-letter code: Ribosomal protein uS12 methylthiotransferase RimO (440 aa).

The region spanning 6–116 (PKVGFVSLGC…VVTAVHEVVP (111 aa)) is the MTTase N-terminal domain. Residues cysteine 15, cysteine 51, cysteine 80, cysteine 149, cysteine 153, and cysteine 156 each contribute to the [4Fe-4S] cluster site. A Radical SAM core domain is found at 135 to 373 (LTPRHYAYLK…MAHQQAISAA (239 aa)). One can recognise a TRAM domain in the interval 376 to 440 (QLKVGKEIEV…DEYDLWAELV (65 aa)).

Belongs to the methylthiotransferase family. RimO subfamily. It depends on [4Fe-4S] cluster as a cofactor.

It localises to the cytoplasm. It carries out the reaction L-aspartate(89)-[ribosomal protein uS12]-hydrogen + (sulfur carrier)-SH + AH2 + 2 S-adenosyl-L-methionine = 3-methylsulfanyl-L-aspartate(89)-[ribosomal protein uS12]-hydrogen + (sulfur carrier)-H + 5'-deoxyadenosine + L-methionine + A + S-adenosyl-L-homocysteine + 2 H(+). Its function is as follows. Catalyzes the methylthiolation of an aspartic acid residue of ribosomal protein uS12. The polypeptide is Ribosomal protein uS12 methylthiotransferase RimO (Pseudomonas aeruginosa (strain ATCC 15692 / DSM 22644 / CIP 104116 / JCM 14847 / LMG 12228 / 1C / PRS 101 / PAO1)).